We begin with the raw amino-acid sequence, 230 residues long: SPbeta prophage-derived putative HNH endonuclease YoqL (230 aa).

Positions cysteine 136–aspartate 188 constitute an HNH domain.

It belongs to the HNH nuclease family.

The chain is SPbeta prophage-derived putative HNH endonuclease YoqL (yoqL) from Bacillus subtilis (strain 168).